The sequence spans 157 residues: Endoribonuclease YbeY (157 aa).

Residues His-114, His-118, and His-124 each coordinate Zn(2+).

Belongs to the endoribonuclease YbeY family. It depends on Zn(2+) as a cofactor.

It localises to the cytoplasm. In terms of biological role, single strand-specific metallo-endoribonuclease involved in late-stage 70S ribosome quality control and in maturation of the 3' terminus of the 16S rRNA. The protein is Endoribonuclease YbeY of Yersinia enterocolitica serotype O:8 / biotype 1B (strain NCTC 13174 / 8081).